Reading from the N-terminus, the 266-residue chain is NADP-dependent mannitol dehydrogenase (266 aa).

Positions 107 and 140 each coordinate NADP(+). The Proton donor role is filled by S159. Y174, K178, I206, and T208 together coordinate NADP(+). The active-site Proton acceptor is the Y174. The active-site Lowers pKa of active site Tyr is K178.

This sequence belongs to the short-chain dehydrogenases/reductases (SDR) family. Homotetramer.

It catalyses the reaction D-mannitol + NADP(+) = D-fructose + NADPH + H(+). Catalyzes the interconversion between D-mannitol and D-fructose. Plays a key role in liamocins biosynthesis by providing the mannitol moity that is linked to 3,5-dihydroxydecanoic acid (provided by the HR-PKS PKS1) via ester bond formation catalyzed by the esterase EST1. The sequence is that of NADP-dependent mannitol dehydrogenase from Aureobasidium melanogenum (Aureobasidium pullulans var. melanogenum).